The primary structure comprises 440 residues: Chromosome partition protein MukF (440 aa).

A leucine-zipper region spans residues 208–236 (LSETSGTLRELQDTLEAAGDKLQANLLRI).

This sequence belongs to the MukF family. In terms of assembly, interacts, and probably forms a ternary complex, with MukE and MukB via its C-terminal region. The complex formation is stimulated by calcium or magnesium. It is required for an interaction between MukE and MukB.

The protein resides in the cytoplasm. It localises to the nucleoid. Involved in chromosome condensation, segregation and cell cycle progression. May participate in facilitating chromosome segregation by condensation DNA from both sides of a centrally located replisome during cell division. Not required for mini-F plasmid partitioning. Probably acts via its interaction with MukB and MukE. Overexpression results in anucleate cells. It has a calcium binding activity. In Yersinia enterocolitica serotype O:8 / biotype 1B (strain NCTC 13174 / 8081), this protein is Chromosome partition protein MukF.